A 149-amino-acid chain; its full sequence is Transcription antitermination protein NusB (149 aa).

This sequence belongs to the NusB family.

Its function is as follows. Involved in transcription antitermination. Required for transcription of ribosomal RNA (rRNA) genes. Binds specifically to the boxA antiterminator sequence of the ribosomal RNA (rrn) operons. The sequence is that of Transcription antitermination protein NusB from Acinetobacter baumannii (strain AB307-0294).